The primary structure comprises 267 residues: NAD kinase 2 (267 aa).

D52 (proton acceptor) is an active-site residue. NAD(+)-binding positions include 52-53 (DA), 124-125 (NE), R151, D153, 164-169 (TAYNKS), and A188.

This sequence belongs to the NAD kinase family. Requires a divalent metal cation as cofactor.

It is found in the cytoplasm. It carries out the reaction NAD(+) + ATP = ADP + NADP(+) + H(+). Functionally, involved in the regulation of the intracellular balance of NAD and NADP, and is a key enzyme in the biosynthesis of NADP. Catalyzes specifically the phosphorylation on 2'-hydroxyl of the adenosine moiety of NAD to yield NADP. The polypeptide is NAD kinase 2 (Bacillus anthracis).